Here is a 381-residue protein sequence, read N- to C-terminus: Protein COS6 (381 aa).

Residues 1–42 are Cytoplasmic-facing; the sequence is MKENELKNEKSVDVLSVKQLESQKTVLPQDLFRSSFTWFCYE. The helical transmembrane segment at 43-63 threads the bilayer; it reads IYKSLVFRIWMLLWLPLSVWW. The Extracellular portion of the chain corresponds to 64–69; that stretch reads KLSNNW. Residues 70–90 traverse the membrane as a helical segment; the sequence is IYPLMVSLLVLFWGPVFVLVI. Over 91-381 the chain is Cytoplasmic; sequence FRLSRKRSLS…QLSCSEESLA (291 aa).

Belongs to the DUP/COS family.

The protein resides in the membrane. This Saccharomyces cerevisiae (strain ATCC 204508 / S288c) (Baker's yeast) protein is Protein COS6 (COS6).